A 78-amino-acid chain; its full sequence is MTILKSIENIMVNRNSTNKLMNNFTNNSNYNNNSNDFINGYIDNNKPLQTIHGNSFVTAIMSPNKCHYPLFNKCPEKF.

This is an uncharacterized protein from Dictyostelium discoideum (Social amoeba).